The sequence spans 147 residues: MVDQARARRLAKRISEIVATAIEYEVKDPRLRFVTITDAKVTGDLREATVYYTVMGETIDAEPDYDAAAAGLAKAKGVLRSKVGAGTGVKFTPSLAFVLDKVPDAAREMEELLARARAADAEVARVAAEARHAGEPDPYKTDRDDAE.

Positions 127-147 (AAEARHAGEPDPYKTDRDDAE) are disordered.

The protein belongs to the RbfA family. As to quaternary structure, monomer. Binds 30S ribosomal subunits, but not 50S ribosomal subunits or 70S ribosomes.

It is found in the cytoplasm. Functionally, one of several proteins that assist in the late maturation steps of the functional core of the 30S ribosomal subunit. Associates with free 30S ribosomal subunits (but not with 30S subunits that are part of 70S ribosomes or polysomes). Required for efficient processing of 16S rRNA. May interact with the 5'-terminal helix region of 16S rRNA. In Nocardia farcinica (strain IFM 10152), this protein is Ribosome-binding factor A.